The following is a 119-amino-acid chain: Ribosome-binding factor A (119 aa).

This sequence belongs to the RbfA family. As to quaternary structure, monomer. Binds 30S ribosomal subunits, but not 50S ribosomal subunits or 70S ribosomes.

It is found in the cytoplasm. Its function is as follows. One of several proteins that assist in the late maturation steps of the functional core of the 30S ribosomal subunit. Associates with free 30S ribosomal subunits (but not with 30S subunits that are part of 70S ribosomes or polysomes). Required for efficient processing of 16S rRNA. May interact with the 5'-terminal helix region of 16S rRNA. The protein is Ribosome-binding factor A of Pelodictyon phaeoclathratiforme (strain DSM 5477 / BU-1).